The chain runs to 126 residues: Arginine decarboxylase proenzyme (126 aa).

Ser74 (schiff-base intermediate with substrate; via pyruvic acid) is an active-site residue. Ser74 is modified (pyruvic acid (Ser); by autocatalysis). The Proton acceptor; for processing activity role is filled by His79. Cys94 serves as the catalytic Proton donor; for catalytic activity.

This sequence belongs to the prokaryotic AdoMetDC family. Type 1 subfamily. Heterooctamer of four alpha and four beta chains arranged as a tetramer of alpha/beta heterodimers. Pyruvate serves as cofactor. Post-translationally, is synthesized initially as an inactive proenzyme. Formation of the active enzyme involves a self-maturation process in which the active site pyruvoyl group is generated from an internal serine residue via an autocatalytic post-translational modification. Two non-identical subunits are generated from the proenzyme in this reaction, and the pyruvate is formed at the N-terminus of the alpha chain, which is derived from the carboxyl end of the proenzyme. The post-translation cleavage follows an unusual pathway, termed non-hydrolytic serinolysis, in which the side chain hydroxyl group of the serine supplies its oxygen atom to form the C-terminus of the beta chain, while the remainder of the serine residue undergoes an oxidative deamination to produce ammonia and the pyruvoyl group blocking the N-terminus of the alpha chain.

The catalysed reaction is L-arginine + H(+) = agmatine + CO2. It functions in the pathway amine and polyamine biosynthesis; agmatine biosynthesis; agmatine from L-arginine: step 1/1. Specifically catalyzes the decarboxylation of L-arginine to agmatine. Has no S-adenosylmethionine decarboxylase (AdoMetDC) activity. The chain is Arginine decarboxylase proenzyme from Pyrobaculum neutrophilum (strain DSM 2338 / JCM 9278 / NBRC 100436 / V24Sta) (Thermoproteus neutrophilus).